A 179-amino-acid chain; its full sequence is UPF0227 protein PM0825 (179 aa).

Belongs to the UPF0227 family.

The protein is UPF0227 protein PM0825 of Pasteurella multocida (strain Pm70).